The chain runs to 196 residues: Phosphatidyl-N-methylethanolamine N-methyltransferase (196 aa).

A topological domain (lumenal) is located at residue M1. Residues 2–28 (AIFEINNSFLICAVSIALNPLLWNIAA) constitute an intramembrane region (helical). Over 29 to 40 (RSEYNHKTLTKL) the chain is Lumenal. The chain crosses the membrane as a helical span at residues 41–62 (ANGDSKKACYMLAACIFVAGIV). Over 63–89 (RDLIYQNALKQQPTLGIFMNPLVQGIA) the chain is Cytoplasmic. The helical transmembrane segment at 90–110 (KLIFCFGSVLVLSSMYKLGLV) threads the bilayer. Residue 94 to 96 (CFG) coordinates S-adenosyl-L-methionine. Topologically, residues 111–153 (GTYLGDYFGFLLPERVSGFPFNVNDNPMYNGSTLCFLSTALRY) are lumenal. A helical membrane pass occupies residues 154–174 (GKVAGLLLTLEVFFVYRIALK). The Cytoplasmic portion of the chain corresponds to 175–196 (FEEPFTAKIYAARDSKQAKKSE). Position 176–177 (176–177 (EE)) interacts with S-adenosyl-L-methionine.

Belongs to the class VI-like SAM-binding methyltransferase superfamily. PEMT/PEM2 methyltransferase family.

The protein localises to the endoplasmic reticulum membrane. Its subcellular location is the mitochondrion membrane. The enzyme catalyses a 1,2-diacyl-sn-glycero-3-phospho-N-methylethanolamine + S-adenosyl-L-methionine = a 1,2-diacyl-sn-glycero-3-phospho-N,N-dimethylethanolamine + S-adenosyl-L-homocysteine + H(+). It carries out the reaction a 1,2-diacyl-sn-glycero-3-phospho-N,N-dimethylethanolamine + S-adenosyl-L-methionine = a 1,2-diacyl-sn-glycero-3-phosphocholine + S-adenosyl-L-homocysteine + H(+). It participates in phospholipid metabolism; phosphatidylcholine biosynthesis. In terms of biological role, catalyzes the second two steps of the methylation pathway of phosphatidylcholine biosynthesis, the SAM-dependent methylation of phosphatidylmonomethylethanolamine (PMME) to phosphatidyldimethylethanolamine (PDME) and of PDME to phosphatidylcholine (PC). The chain is Phosphatidyl-N-methylethanolamine N-methyltransferase from Schizosaccharomyces pombe (strain 972 / ATCC 24843) (Fission yeast).